Consider the following 200-residue polypeptide: MATIFDILKTLNNNNNNINNNKIESCKRQYTVNKRIDIIPSMDVTMTNDKLIIETELPGVSKNDIDINIKDSILIIQGEKKNNIIKLQQQQQQQSEKSSQSTNNKDDDEPSIEEYEDDTKLKSNLNKNTENKDENKTTSSITNKKFISERSFGNFKRYLNLSEILYQLDLNSINTQFENGLLTITINKKSDNFQIKLKSI.

In terms of domain architecture, sHSP spans N33–I200. The tract at residues K86–S139 is disordered. Positions Q88 to S101 are enriched in low complexity. Positions D106 to D117 are enriched in acidic residues.

The protein belongs to the small heat shock protein (HSP20) family.

The polypeptide is Small heat shock protein hspG2 (hspG2) (Dictyostelium discoideum (Social amoeba)).